The sequence spans 396 residues: 1-deoxy-D-xylulose 5-phosphate reductoisomerase (396 aa).

Residues Thr10, Gly11, Ser12, Ile13, Gly36, Lys37, Asn38, and Asn124 each contribute to the NADPH site. Lys125 is a 1-deoxy-D-xylulose 5-phosphate binding site. NADPH is bound at residue Glu126. Residue Asp150 participates in Mn(2+) binding. 1-deoxy-D-xylulose 5-phosphate-binding residues include Ser151, Glu152, Ser186, and His209. Glu152 is a binding site for Mn(2+). Gly215 lines the NADPH pocket. 1-deoxy-D-xylulose 5-phosphate contacts are provided by Ser222, Asn227, Lys228, and Glu231. Position 231 (Glu231) interacts with Mn(2+).

The protein belongs to the DXR family. The cofactor is Mg(2+). Mn(2+) is required as a cofactor.

The enzyme catalyses 2-C-methyl-D-erythritol 4-phosphate + NADP(+) = 1-deoxy-D-xylulose 5-phosphate + NADPH + H(+). It participates in isoprenoid biosynthesis; isopentenyl diphosphate biosynthesis via DXP pathway; isopentenyl diphosphate from 1-deoxy-D-xylulose 5-phosphate: step 1/6. In terms of biological role, catalyzes the NADPH-dependent rearrangement and reduction of 1-deoxy-D-xylulose-5-phosphate (DXP) to 2-C-methyl-D-erythritol 4-phosphate (MEP). The sequence is that of 1-deoxy-D-xylulose 5-phosphate reductoisomerase from Actinobacillus pleuropneumoniae serotype 3 (strain JL03).